We begin with the raw amino-acid sequence, 434 residues long: Adenylosuccinate synthetase (434 aa).

Residues 11-17 and 39-41 contribute to the GTP site; these read GDEGKGK and GHT. Aspartate 12 functions as the Proton acceptor in the catalytic mechanism. Mg(2+) contacts are provided by aspartate 12 and glycine 39. IMP is bound by residues 12–15, 37–40, threonine 134, arginine 148, asparagine 230, threonine 245, and arginine 309; these read DEGK and NAGH. The active-site Proton donor is the histidine 40. 305-311 provides a ligand contact to substrate; the sequence is VTTGRKR. Residues arginine 311, 337–339, and 419–421 contribute to the GTP site; these read KLD and GTG.

This sequence belongs to the adenylosuccinate synthetase family. Homodimer. It depends on Mg(2+) as a cofactor.

It localises to the cytoplasm. The catalysed reaction is IMP + L-aspartate + GTP = N(6)-(1,2-dicarboxyethyl)-AMP + GDP + phosphate + 2 H(+). It functions in the pathway purine metabolism; AMP biosynthesis via de novo pathway; AMP from IMP: step 1/2. Its function is as follows. Plays an important role in the de novo pathway and in the salvage pathway of purine nucleotide biosynthesis. Catalyzes the first committed step in the biosynthesis of AMP from IMP. The protein is Adenylosuccinate synthetase of Lachancea thermotolerans (strain ATCC 56472 / CBS 6340 / NRRL Y-8284) (Yeast).